A 338-amino-acid chain; its full sequence is 1-aminocyclopropane-1-carboxylate deaminase (338 aa).

The residue at position 51 (Lys51) is an N6-(pyridoxal phosphate)lysine. Ser78 functions as the Nucleophile in the catalytic mechanism.

The protein belongs to the ACC deaminase/D-cysteine desulfhydrase family. In terms of assembly, homotrimer. It depends on pyridoxal 5'-phosphate as a cofactor.

It carries out the reaction 1-aminocyclopropane-1-carboxylate + H2O = 2-oxobutanoate + NH4(+). In terms of biological role, catalyzes a cyclopropane ring-opening reaction, the irreversible conversion of 1-aminocyclopropane-1-carboxylate (ACC) to ammonia and alpha-ketobutyrate. Allows growth on ACC as a nitrogen source. The polypeptide is 1-aminocyclopropane-1-carboxylate deaminase (Burkholderia cenocepacia (strain HI2424)).